The sequence spans 288 residues: N-acetylneuraminate lyase (288 aa).

Positions 44 and 45 each coordinate aceneuramate. Y133 functions as the Proton donor in the catalytic mechanism. The active-site Schiff-base intermediate with substrate is the K161. Aceneuramate contacts are provided by T163, G185, D187, E188, and S204.

This sequence belongs to the DapA family. NanA subfamily. Homotetramer.

It is found in the cytoplasm. The enzyme catalyses aceneuramate = aldehydo-N-acetyl-D-mannosamine + pyruvate. Its pathway is amino-sugar metabolism; N-acetylneuraminate degradation; D-fructose 6-phosphate from N-acetylneuraminate: step 1/5. Catalyzes the reversible aldol cleavage of N-acetylneuraminic acid (sialic acid; Neu5Ac) to form pyruvate and N-acetylmannosamine (ManNAc) via a Schiff base intermediate. This is N-acetylneuraminate lyase from Clostridium perfringens (strain ATCC 13124 / DSM 756 / JCM 1290 / NCIMB 6125 / NCTC 8237 / Type A).